Consider the following 177-residue polypeptide: Dual-action ribosomal maturation protein DarP (177 aa).

The protein belongs to the DarP family.

The protein localises to the cytoplasm. Its function is as follows. Member of a network of 50S ribosomal subunit biogenesis factors which assembles along the 30S-50S interface, preventing incorrect 23S rRNA structures from forming. Promotes peptidyl transferase center (PTC) maturation. The polypeptide is Dual-action ribosomal maturation protein DarP (Histophilus somni (strain 2336) (Haemophilus somnus)).